Here is a 163-residue protein sequence, read N- to C-terminus: Globin CTT-Z (163 aa).

The signal sequence occupies residues M1–A16. A Globin domain is found at P18–T162. 2 residues coordinate heme b: H76 and H111.

It belongs to the globin family.

The protein is Globin CTT-Z (CTT-Z) of Chironomus thummi thummi (Midge).